A 61-amino-acid chain; its full sequence is Large ribosomal subunit protein uL30 (61 aa).

Belongs to the universal ribosomal protein uL30 family. Part of the 50S ribosomal subunit.

In Marinomonas sp. (strain MWYL1), this protein is Large ribosomal subunit protein uL30.